Here is a 121-residue protein sequence, read N- to C-terminus: UPF0102 protein HRM2_30940 (121 aa).

This sequence belongs to the UPF0102 family.

The sequence is that of UPF0102 protein HRM2_30940 from Desulforapulum autotrophicum (strain ATCC 43914 / DSM 3382 / VKM B-1955 / HRM2) (Desulfobacterium autotrophicum).